Here is a 324-residue protein sequence, read N- to C-terminus: Serpentine receptor class delta-30 (324 aa).

7 consecutive transmembrane segments (helical) span residues 5–25 (IIHS…MYLA), 38–58 (AIIT…FFVM), 83–103 (ACYV…IWMI), 124–144 (VFVA…WFSF), 176–196 (ITLI…YIWI), 227–247 (FQVF…SMFT), and 258–278 (AISV…ILFV). The segment at 290 to 324 (KQPKPHPEMCGPIRSNTRTTSISVTNNSSHLSSAH) is disordered. Polar residues predominate over residues 303-324 (RSNTRTTSISVTNNSSHLSSAH).

It belongs to the nematode receptor-like protein srd family.

The protein localises to the membrane. The polypeptide is Serpentine receptor class delta-30 (srd-30) (Caenorhabditis elegans).